Reading from the N-terminus, the 156-residue chain is Baculoviral IAP repeat-containing protein 5.2 (156 aa).

The stretch at 30–100 (RLSTFANWPF…KHSPSCLFIA (71 aa)) is one BIR repeat. Thr-46 carries the post-translational modification Phosphothreonine; by CDK1. Zn(2+)-binding residues include Cys-69, Cys-72, His-89, and Cys-96.

Belongs to the IAP family. As to quaternary structure, component of the CPC at least composed of survivin/birc5, incenp, cdca8/borealin and/or cdca9/dasra-A, and aurkb/aurora-B. Interacts directly with incenp (via N-terminus). Interacts with rxra; the interaction is stronger in the absence of 9-cis retinoic acids. In terms of processing, ubiquitination is required for centrosome-targeting.

Its subcellular location is the cytoplasm. The protein resides in the nucleus. It is found in the chromosome. The protein localises to the centromere. It localises to the cytoskeleton. Its subcellular location is the spindle. In terms of biological role, component of the chromosomal passenger complex (CPC), a complex that acts as a key regulator of mitosis. The CPC complex has essential functions at the centromere in ensuring correct chromosome alignment and segregation and is required for chromatin-induced microtubule stabilization and spindle assembly. Does not appear to exhibit anti-apoptotic activity. Plays a role in increasing blood vessel size during development. This is Baculoviral IAP repeat-containing protein 5.2 (birc5.2) from Xenopus tropicalis (Western clawed frog).